A 386-amino-acid chain; its full sequence is Short integuments 2, mitochondrial (386 aa).

Residues 37–207 (TRAIRNRLKL…VLDSPGVLVP (171 aa)) enclose the CP-type G domain. Residues 55 to 59 (DARIP) carry the DARXP motif motif. The G4 stretch occupies residues 81–84 (NKKD). GTP contacts are provided by residues 81–84 (NKKD), 109–110 (NA), and 146–151 (NVGKSA). A G5 region spans residues 109–111 (NAH). The tract at residues 143–150 (GVPNVGKS) is G1. The interval 180–184 (GVTQD) is G2. Residues 200-203 (DSPG) form a G3 region. G203 is a binding site for GTP.

The protein belongs to the TRAFAC class YlqF/YawG GTPase family. MTG1 subfamily. As to expression, expressed in seedlings, roots, leaves, stems, inflorescences and siliques.

Its subcellular location is the mitochondrion. Its function is as follows. GTPase that may function in mitochondrial ribosome assembly. Involved in a variety of growth processes during vegetative development and promotes growth and cell division in the developing integuments. In Arabidopsis thaliana (Mouse-ear cress), this protein is Short integuments 2, mitochondrial.